Reading from the N-terminus, the 783-residue chain is Glucosidase YgjK (783 aa).

An N-terminal signal peptide occupies residues 1-22 (MKIKTILTPVTCALLISFSAHA). Positions 24-254 (NADNYKNVIN…TTLYTTYSHL (231 aa)) are N-terminal domain. The segment at 254–299 (LLTAQEVSKEQMQIRDILARPAFYLTASQQRWEEYLKKGLTNPDAT) is linker. An a domain region spans residues 300–783 (PEQTRVAVKA…MLYNDFFRKQ (484 aa)). Positions 454, 456, 458, 460, and 462 each coordinate Ca(2+). Asp-524 serves as the catalytic Proton donor. Glu-572 is a binding site for Ca(2+). Glu-750 acts as the Proton acceptor in catalysis.

It belongs to the glycosyl hydrolase 63 family.

In terms of biological role, glucoside hydrolase that cleaves the alpha-1,3-glucosidic linkage in nigerose. Has very low activity towards maltooligosaccharides, soluble starch, nigerotriose, kojibiose and trehalose. This is Glucosidase YgjK (ygjK) from Escherichia coli (strain K12).